The following is a 447-amino-acid chain: Cysteine--tRNA ligase (447 aa).

Cysteine 28 is a binding site for Zn(2+). The 'HIGH' region motif lies at 30 to 40 (PTVYNYIHIGN). Zn(2+) is bound by residues cysteine 211, histidine 236, and glutamate 240. The 'KMSKS' region motif lies at 268–272 (KMSKS). Lysine 271 is a binding site for ATP.

The protein belongs to the class-I aminoacyl-tRNA synthetase family. As to quaternary structure, monomer. Zn(2+) is required as a cofactor.

The protein resides in the cytoplasm. It catalyses the reaction tRNA(Cys) + L-cysteine + ATP = L-cysteinyl-tRNA(Cys) + AMP + diphosphate. The polypeptide is Cysteine--tRNA ligase (Streptococcus thermophilus (strain CNRZ 1066)).